Consider the following 245-residue polypeptide: Epoxyqueuosine reductase QueH (245 aa).

[4Fe-4S] cluster is bound by residues cysteine 52, cysteine 53, cysteine 131, and cysteine 134. Cysteines 214 and 216 form a disulfide.

Belongs to the QueH family.

It catalyses the reaction epoxyqueuosine(34) in tRNA + AH2 = queuosine(34) in tRNA + A + H2O. Its pathway is tRNA modification; tRNA-queuosine biosynthesis. In terms of biological role, catalyzes the conversion of epoxyqueuosine (oQ) to queuosine (Q), which is a hypermodified base found in the wobble positions of tRNA(Asp), tRNA(Asn), tRNA(His) and tRNA(Tyr). This chain is Epoxyqueuosine reductase QueH, found in Haemophilus influenzae (strain ATCC 51907 / DSM 11121 / KW20 / Rd).